Consider the following 206-residue polypeptide: Large ribosomal subunit protein uL4 (206 aa).

Residues 63-97 (MYKQKGTGRARHHSARAPQFRGGGKAHGPVVRSHE) are disordered. Residues 64–77 (YKQKGTGRARHHSA) show a composition bias toward basic residues.

The protein belongs to the universal ribosomal protein uL4 family. Part of the 50S ribosomal subunit.

Functionally, one of the primary rRNA binding proteins, this protein initially binds near the 5'-end of the 23S rRNA. It is important during the early stages of 50S assembly. It makes multiple contacts with different domains of the 23S rRNA in the assembled 50S subunit and ribosome. In terms of biological role, forms part of the polypeptide exit tunnel. This Rhizobium etli (strain CIAT 652) protein is Large ribosomal subunit protein uL4.